A 209-amino-acid polypeptide reads, in one-letter code: PF03932 family protein CutC (209 aa).

This sequence belongs to the CutC family.

Its subcellular location is the cytoplasm. In terms of biological role, might participate in the control of copper homeostasis; data from other bacteria suggests it is not involved. The polypeptide is PF03932 family protein CutC (Enterococcus faecalis (strain ATCC 700802 / V583)).